Here is a 173-residue protein sequence, read N- to C-terminus: Lipoprotein signal peptidase (173 aa).

A run of 3 helical transmembrane segments spans residues 9 to 29 (LPFLLTAIVIVVDQVTKILVV), 37 to 57 (VIPVIGDLVNLRFVYNTGAAF), and 70 to 90 (ILLVFLPFLLLIALTGAYLKS). Residues D124 and D146 contribute to the active site. Residues 142 to 162 (FNAADSFIVCCGIGLGVNLIL) traverse the membrane as a helical segment.

Belongs to the peptidase A8 family.

It localises to the cell inner membrane. The enzyme catalyses Release of signal peptides from bacterial membrane prolipoproteins. Hydrolyzes -Xaa-Yaa-Zaa-|-(S,diacylglyceryl)Cys-, in which Xaa is hydrophobic (preferably Leu), and Yaa (Ala or Ser) and Zaa (Gly or Ala) have small, neutral side chains.. It participates in protein modification; lipoprotein biosynthesis (signal peptide cleavage). In terms of biological role, this protein specifically catalyzes the removal of signal peptides from prolipoproteins. In Treponema denticola (strain ATCC 35405 / DSM 14222 / CIP 103919 / JCM 8153 / KCTC 15104), this protein is Lipoprotein signal peptidase.